A 206-amino-acid chain; its full sequence is Outer-membrane lipoprotein carrier protein (206 aa).

Positions 1–21 are cleaved as a signal peptide; that stretch reads MKKLLCAVLLSPLLYSNAVLA.

The protein belongs to the LolA family. Monomer.

Its subcellular location is the periplasm. Its function is as follows. Participates in the translocation of lipoproteins from the inner membrane to the outer membrane. Only forms a complex with a lipoprotein if the residue after the N-terminal Cys is not an aspartate (The Asp acts as a targeting signal to indicate that the lipoprotein should stay in the inner membrane). The chain is Outer-membrane lipoprotein carrier protein from Shewanella oneidensis (strain ATCC 700550 / JCM 31522 / CIP 106686 / LMG 19005 / NCIMB 14063 / MR-1).